Here is a 453-residue protein sequence, read N- to C-terminus: Growth/differentiation factor 9 (453 aa).

An N-terminal signal peptide occupies residues 1–27; it reads MALPNKFFLWFCCFAWLCFPISLDSLP. Residues 28–318 constitute a propeptide that is removed on maturation; sequence SRGEAQIVAR…EGVRSSRHRR (291 aa). 4 N-linked (GlcNAc...) asparagine glycosylation sites follow: Asn-163, Asn-236, Asn-255, and Asn-269. The disordered stretch occupies residues 282–328; that stretch reads LHPKRKPSQGPDQRRELSAYPVGEEAAEGVRSSRHRRDQESVSSELK. Over residues 318–328 the composition is skewed to basic and acidic residues; the sequence is RDQESVSSELK. N-linked (GlcNAc...) asparagine glycosylation occurs at Asn-337. 3 cysteine pairs are disulfide-bonded: Cys-352/Cys-418, Cys-381/Cys-450, and Cys-385/Cys-452.

Belongs to the TGF-beta family. As to quaternary structure, homodimer or heterodimer (Potential). But, in contrast to other members of this family, cannot be disulfide-linked. Phosphorylated; phosphorylation is critical for GDF9 function.

Its subcellular location is the secreted. Its function is as follows. Required for ovarian folliculogenesis. The chain is Growth/differentiation factor 9 (GDF9) from Capra hircus (Goat).